A 143-amino-acid chain; its full sequence is Interleukin-3 (143 aa).

The N-terminal stretch at 1-19 (MSRLPVLLLLHLLVSPGLQ) is a signal peptide. A disulfide bridge links Cys-35 with Cys-103. N-linked (GlcNAc...) asparagine glycosylation is present at Asn-89.

It belongs to the IL-3 family. As to quaternary structure, monomer. In terms of tissue distribution, activated T-cells, mast cells, natural killer cells.

The protein resides in the secreted. In terms of biological role, granulocyte/macrophage colony-stimulating factors are cytokines that act in hematopoiesis by controlling the production, differentiation, and function of 2 related white cell populations of the blood, the granulocytes and the monocytes-macrophages. Its function is as follows. This CSF induces granulocytes, macrophages, mast cells, stem cells, erythroid cells, eosinophils and megakaryocytes. This chain is Interleukin-3 (IL3), found in Macaca mulatta (Rhesus macaque).